The chain runs to 74 residues: uncharacterized protein (74 aa).

This sequence to U.parvum UU416.

This is an uncharacterized protein from Mycoplasma pneumoniae (strain ATCC 29342 / M129 / Subtype 1) (Mycoplasmoides pneumoniae).